The chain runs to 1021 residues: Nonribosomal peptide synthetase asaC (1021 aa).

The tract at residues 17–418 (RHHVRTSPNA…ARADNMVKIR (402 aa)) is adenylation (A) domain. A Carrier domain is found at 528-603 (KDAGDSVTWL…GLASVIDAGH (76 aa)). Ser-563 bears the O-(pantetheine 4'-phosphoryl)serine mark. The interval 646–888 (LTGATGFLGT…MIPVDFITTA (243 aa)) is short-chain dehydrogenase/reductase (R) domain.

Belongs to the NRP synthetase family.

It functions in the pathway secondary metabolite biosynthesis. Functionally, nonribosomal peptide synthetase; part of the gene cluster that mediates the biosynthesis of aspergillic acid, a hydroxamic acid-containing pyrazinone with aliphatic side chains that originates from leucine (Leu) and isoleucine (Ile). Aspergillic acid has antibiotic properties and was shown to be lethal to mice. The first step in the pathway is the production of deoxyaspergillic acid via a condensation between the Ile amine and the Leu carboxylic acid, followed by a reductive release from the protein forming the dipeptide aldehyde NH(2)-Leu-Ile-CHO, which could undergo an intermolecular cyclization resulting in a dihydropyrazinone. As the NRPS asaC lacks a condensation domain, it is improbable that it is responsible for condensation of Leu and Ile. One possibility is that asaC acts on a previously condensed dipeptide and functions as a Leu-Ile reductase to yield deoxyaspergillic acid. After asaC forms deoxyaspergillic acid, the cytochrome P450 asaD oxidizes the pyrazinone to the hydroxamic acid-containing bioactive metabolite aspergillic acid. The hydroxylase/desaturase asaB can then convert aspergillic acid to hydroxyaspergillic acid. Both aspergillic acid and hydroxyaspergillic acid can form complexes with iron producing ferriaspergillin analogs. The protein is Nonribosomal peptide synthetase asaC of Aspergillus flavus (strain ATCC 200026 / FGSC A1120 / IAM 13836 / NRRL 3357 / JCM 12722 / SRRC 167).